Here is a 1042-residue protein sequence, read N- to C-terminus: Isoleucine--tRNA ligase (1042 aa).

The 'HIGH' region signature appears at 48-58 (PFATGLPHFGH). The 'KMSKS' region signature appears at 594–598 (KMSKS). K597 is a binding site for ATP.

Belongs to the class-I aminoacyl-tRNA synthetase family. IleS type 2 subfamily. Monomer. Requires Zn(2+) as cofactor.

The protein resides in the cytoplasm. The enzyme catalyses tRNA(Ile) + L-isoleucine + ATP = L-isoleucyl-tRNA(Ile) + AMP + diphosphate. Functionally, catalyzes the attachment of isoleucine to tRNA(Ile). As IleRS can inadvertently accommodate and process structurally similar amino acids such as valine, to avoid such errors it has two additional distinct tRNA(Ile)-dependent editing activities. One activity is designated as 'pretransfer' editing and involves the hydrolysis of activated Val-AMP. The other activity is designated 'posttransfer' editing and involves deacylation of mischarged Val-tRNA(Ile). This Borrelia garinii subsp. bavariensis (strain ATCC BAA-2496 / DSM 23469 / PBi) (Borreliella bavariensis) protein is Isoleucine--tRNA ligase.